A 695-amino-acid chain; its full sequence is Adhesion G protein-coupled receptor F4 (695 aa).

The N-terminal stretch at 1–21 (MKMKSQATMICCLVFFLSTEC) is a signal peptide. Residues 22–406 (SHYRSKIHLK…TDKVLDYITC (385 aa)) are Extracellular-facing. Residues asparagine 61, asparagine 169, asparagine 177, asparagine 209, asparagine 229, asparagine 250, asparagine 257, asparagine 263, asparagine 264, asparagine 286, asparagine 309, and asparagine 340 are each glycosylated (N-linked (GlcNAc...) asparagine). The GAIN-B domain occupies 249–397 (HNTSEKSLNF…SILMSSKSMT (149 aa)). 2 disulfide bridges follow: cysteine 349-cysteine 376 and cysteine 364-cysteine 378. The GPS stretch occupies residues 349 to 397 (CVGWHSKKRRWDEKACQMMLDIRNEVKCRCNYTSVVMSFSILMSSKSMT). Residue asparagine 379 is glycosylated (N-linked (GlcNAc...) asparagine). The helical transmembrane segment at 407-427 (IGLSVSILSLVLCLIIEATVW) threads the bilayer. At 428–440 (SRVVVTEISYMRH) the chain is on the cytoplasmic side. The chain crosses the membrane as a helical span at residues 441 to 461 (VCIVNIAVSLLTANVWFIIGS). Over 462 to 485 (HFNIKAQDYNMCVAVTFFSHFFYL) the chain is Extracellular. A helical transmembrane segment spans residues 486–506 (SLFFWMLFKALLIIYGILVIF). Over 507–515 (RRMMKSRMM) the chain is Cytoplasmic. The chain crosses the membrane as a helical span at residues 516–536 (VIGFAIGYGCPLIIAVTTVAI). The Extracellular portion of the chain corresponds to 537-561 (TEPEKGYMRPEACWLNWDNTKALLA). A helical membrane pass occupies residues 562–582 (FAIPAFVIVAVNLIVVLVVAV). Over 583–606 (NTQRPSIGSSKSQDVVIIMRISKN) the chain is Cytoplasmic. Residues 607–627 (VAILTPLLGLTWGFGIATLIE) form a helical membrane-spanning segment. Residues 628-634 (GTSLTFH) are Extracellular-facing. A helical membrane pass occupies residues 635–655 (IIFALLNAFQGFFILLFGTIM). Over 656-695 (DHKIRDALRMRMSSLKGKSRAAENASLGPTNGSKLMNRQG) the chain is Cytoplasmic. Residues 674 to 695 (SRAAENASLGPTNGSKLMNRQG) form a disordered region. Over residues 682-695 (LGPTNGSKLMNRQG) the composition is skewed to polar residues.

It belongs to the G-protein coupled receptor 2 family. Adhesion G-protein coupled receptor (ADGR) subfamily.

The protein localises to the membrane. Its function is as follows. Orphan receptor. This is Adhesion G protein-coupled receptor F4 (ADGRF4) from Homo sapiens (Human).